The chain runs to 63 residues: MECYRCGVSGCHLKITCSAEETFCYKWLNKISNERWLGCAKTCTEIDTWNVYNKCCTTNLCNT.

Cystine bridges form between Cys3-Cys24, Cys6-Cys11, Cys17-Cys39, Cys43-Cys55, and Cys56-Cys61.

Expressed by the venom gland.

Its subcellular location is the secreted. This toxin is described as enhancing presynaptic acetylcholine release, but neither experimental results, nor references to other sources are available. The protein is Bucandin of Bungarus candidus (Malayan krait).